The following is a 385-amino-acid chain: 8-amino-7-oxononanoate synthase (385 aa).

Arg23 serves as a coordination point for substrate. A pyridoxal 5'-phosphate-binding site is contributed by 110-111 (GF). His135 is a binding site for substrate. Pyridoxal 5'-phosphate is bound by residues Ser180, His208, and Thr234. Residue Lys237 is modified to N6-(pyridoxal phosphate)lysine. Position 350 (Thr350) interacts with substrate.

This sequence belongs to the class-II pyridoxal-phosphate-dependent aminotransferase family. BioF subfamily. In terms of assembly, homodimer. It depends on pyridoxal 5'-phosphate as a cofactor.

The catalysed reaction is 6-carboxyhexanoyl-[ACP] + L-alanine + H(+) = (8S)-8-amino-7-oxononanoate + holo-[ACP] + CO2. It functions in the pathway cofactor biosynthesis; biotin biosynthesis. Functionally, catalyzes the decarboxylative condensation of pimeloyl-[acyl-carrier protein] and L-alanine to produce 8-amino-7-oxononanoate (AON), [acyl-carrier protein], and carbon dioxide. In Vibrio vulnificus (strain YJ016), this protein is 8-amino-7-oxononanoate synthase.